The sequence spans 466 residues: 3-isopropylmalate dehydratase large subunit (466 aa).

The [4Fe-4S] cluster site is built by Cys-347, Cys-407, and Cys-410.

The protein belongs to the aconitase/IPM isomerase family. LeuC type 1 subfamily. As to quaternary structure, heterodimer of LeuC and LeuD. [4Fe-4S] cluster is required as a cofactor.

It carries out the reaction (2R,3S)-3-isopropylmalate = (2S)-2-isopropylmalate. The protein operates within amino-acid biosynthesis; L-leucine biosynthesis; L-leucine from 3-methyl-2-oxobutanoate: step 2/4. Functionally, catalyzes the isomerization between 2-isopropylmalate and 3-isopropylmalate, via the formation of 2-isopropylmaleate. The protein is 3-isopropylmalate dehydratase large subunit of Klebsiella pneumoniae subsp. pneumoniae (strain ATCC 700721 / MGH 78578).